The sequence spans 275 residues: S-methyl-5'-thioadenosine phosphorylase (275 aa).

Residues Ser-20, Arg-62–His-63, and Ser-95–Ala-96 contribute to the phosphate site. Intrachain disulfides connect Cys-143-Cys-210, Cys-205-Cys-266, and Cys-264-Cys-267. A substrate-binding site is contributed by Met-195. Phosphate is bound at residue Thr-196. Position 219 to 221 (Asp-219 to Asp-221) interacts with substrate.

The protein belongs to the PNP/MTAP phosphorylase family. MTAP subfamily. As to quaternary structure, homohexamer. Dimer of a homotrimer.

The catalysed reaction is S-methyl-5'-thioadenosine + phosphate = 5-(methylsulfanyl)-alpha-D-ribose 1-phosphate + adenine. It functions in the pathway amino-acid biosynthesis; L-methionine biosynthesis via salvage pathway; S-methyl-5-thio-alpha-D-ribose 1-phosphate from S-methyl-5'-thioadenosine (phosphorylase route): step 1/1. In terms of biological role, catalyzes the reversible phosphorylation of S-methyl-5'-thioadenosine (MTA) to adenine and 5-methylthioribose-1-phosphate. Involved in the breakdown of MTA, a major by-product of polyamine biosynthesis. Responsible for the first step in the methionine salvage pathway after MTA has been generated from S-adenosylmethionine. Has broad substrate specificity with 6-aminopurine nucleosides as preferred substrates. This Aeropyrum pernix (strain ATCC 700893 / DSM 11879 / JCM 9820 / NBRC 100138 / K1) protein is S-methyl-5'-thioadenosine phosphorylase.